A 501-amino-acid chain; its full sequence is Protein DETOXIFICATION 37 (501 aa).

12 helical membrane-spanning segments follow: residues 44 to 64 (MMIE…VYVI), 84 to 104 (LAAA…LLLG), 134 to 154 (VVLI…NPIL), 163 to 183 (VATL…AYAV), 200 to 220 (SAYI…IAVY), 222 to 242 (LGYG…IIVV), 280 to 300 (AVML…AGLL), 310 to 330 (LAIC…FNAA), 352 to 372 (VVTT…VLSW), 396 to 416 (FLAI…VAVG), 422 to 442 (FVAY…GFVL), and 453 to 473 (IWTG…IVTL).

Belongs to the multi antimicrobial extrusion (MATE) (TC 2.A.66.1) family.

Its subcellular location is the membrane. This is Protein DETOXIFICATION 37 from Arabidopsis thaliana (Mouse-ear cress).